The primary structure comprises 551 residues: MYRPLVARLLRDSVATRKGSSHFARRFSHSLPFATVDAEELSGAKPAEVLNLVQGNWGGSSSWHTVVDPLNGEPFIKVAEVDETEIKPFVESLSKCPKHGLHNPFKSPERYLLYGDISTKAGHMLSIPKVSEFFARLIQRVAPKSYHQALGEVQVTQKFFENFTGDQVRFLARSFGVPGNHLGQQSNGFRWPFGPVAIITPFNFPLEIPVLQLMGALYMGNKPLLKVDSKVSIVMEQMMRLLHYCGLPVGDADFVNSDGKAMNKILLEANPRMTLFTGSSRVAEKLALDLKGRIKLEDAGFDWKILGPDVNEADYVAWVCDQDAYACSGQKCSAQSILFMHENWAATPLISRLKELAERRKLEDLTVGPVLTVTTEAMLDHLNKLLQIPGAKLLFGGKPLENHTIPSIYGAVKPTAVYVPLEEILKVSNYELVTKEIFGPFQVVTEYKNSQLPMVLEALERMHAHLTAAVVSNDQLFLQEVIGNTVNGTTYAGLRARTTGAPQNHWFGPAGDPRGAGIGTPEAIKLVWSCHREIIYDIGPVSHHWEIPPST.

Gly-278 to Ala-283 serves as a coordination point for NAD(+). The active-site Proton acceptor is the Glu-297. Cys-332 acts as the Nucleophile in catalysis.

The protein belongs to the aldehyde dehydrogenase family. As to expression, in uninfected plants, highest levels found in stems. In plants infected with the flax rust, highest levels in leaves. Higher levels of expression in infected leaves than uninfected stems.

It catalyses the reaction an aldehyde + NAD(+) + H2O = a carboxylate + NADH + 2 H(+). In terms of biological role, could be involved in facilitating the biotrophic relationship between the plant and the rust fungus. The polypeptide is Probable aldehyde dehydrogenase (FIS1) (Linum usitatissimum (Flax)).